The chain runs to 351 residues: Ribonucleoside-diphosphate reductase subunit M2 B (351 aa).

The tract at residues 1–31 (MGDPERPEAAGLDQDERSSSDTNENEIKSNE) is disordered. The Fe cation site is built by Asp100, Glu131, and His134. The active site involves Tyr138. 3 residues coordinate Fe cation: Glu194, Glu228, and His231.

This sequence belongs to the ribonucleoside diphosphate reductase small chain family. As to quaternary structure, heterotetramer with large (RRM1) subunit. Interacts with p53/TP53. Interacts with RRM1 in response to DNA damage. Requires Fe cation as cofactor.

It is found in the cytoplasm. Its subcellular location is the nucleus. The enzyme catalyses a 2'-deoxyribonucleoside 5'-diphosphate + [thioredoxin]-disulfide + H2O = a ribonucleoside 5'-diphosphate + [thioredoxin]-dithiol. Its function is as follows. Plays a pivotal role in cell survival by repairing damaged DNA in a p53/TP53-dependent manner. Supplies deoxyribonucleotides for DNA repair in cells arrested at G1 or G2. Contains an iron-tyrosyl free radical center required for catalysis. Forms an active ribonucleotide reductase (RNR) complex with RRM1 which is expressed both in resting and proliferating cells in response to DNA damage. In Pongo abelii (Sumatran orangutan), this protein is Ribonucleoside-diphosphate reductase subunit M2 B (RRM2B).